Reading from the N-terminus, the 709-residue chain is Polyribonucleotide nucleotidyltransferase (709 aa).

D485 and D491 together coordinate Mg(2+). Residues 552–611 (PRIYTMKIDPKKIKDVIGKGGATIRSLTEETGTSIDIDDDGTVKIAAVDSNAAKNVMGRI) form the KH domain. The 69-residue stretch at 621 to 689 (GAIYKGKVTR…RQGRIRLTMK (69 aa)) folds into the S1 motif domain.

This sequence belongs to the polyribonucleotide nucleotidyltransferase family. As to quaternary structure, component of the RNA degradosome, which is a multiprotein complex involved in RNA processing and mRNA degradation. Mg(2+) serves as cofactor.

Its subcellular location is the cytoplasm. It catalyses the reaction RNA(n+1) + phosphate = RNA(n) + a ribonucleoside 5'-diphosphate. In terms of biological role, involved in mRNA degradation. Catalyzes the phosphorolysis of single-stranded polyribonucleotides processively in the 3'- to 5'-direction. This chain is Polyribonucleotide nucleotidyltransferase, found in Haemophilus influenzae (strain PittGG).